A 511-amino-acid chain; its full sequence is GMP synthase [glutamine-hydrolyzing] (511 aa).

One can recognise a Glutamine amidotransferase type-1 domain in the interval 5–195 (MILVLDFGGQ…LYNICGCKGD (191 aa)). C82 functions as the Nucleophile in the catalytic mechanism. Catalysis depends on residues H169 and E171. The GMPS ATP-PPase domain occupies 196 to 386 (WKMSSFVENS…LGIPEDLVWR (191 aa)). An ATP-binding site is contributed by 223–229 (SGGVDSS).

In terms of assembly, homodimer.

The enzyme catalyses XMP + L-glutamine + ATP + H2O = GMP + L-glutamate + AMP + diphosphate + 2 H(+). It participates in purine metabolism; GMP biosynthesis; GMP from XMP (L-Gln route): step 1/1. Catalyzes the synthesis of GMP from XMP. This chain is GMP synthase [glutamine-hydrolyzing], found in Ruminiclostridium cellulolyticum (strain ATCC 35319 / DSM 5812 / JCM 6584 / H10) (Clostridium cellulolyticum).